The primary structure comprises 317 residues: Probable deoxyhypusine synthase (317 aa).

The active-site Nucleophile is the Lys285.

The protein belongs to the deoxyhypusine synthase family. Requires NAD(+) as cofactor.

The enzyme catalyses [eIF5A protein]-L-lysine + spermidine = [eIF5A protein]-deoxyhypusine + propane-1,3-diamine. It functions in the pathway protein modification; eIF5A hypusination. Its function is as follows. Catalyzes the NAD-dependent oxidative cleavage of spermidine and the subsequent transfer of the butylamine moiety of spermidine to the epsilon-amino group of a specific lysine residue of the eIF-5A precursor protein to form the intermediate deoxyhypusine residue. In Methanosarcina thermophila, this protein is Probable deoxyhypusine synthase (dys).